The chain runs to 190 residues: Abscisic acid receptor PYL2 (190 aa).

The segment at 28 to 182 (FEPDPTTCTS…NLQKLGVAAT (155 aa)) is START-like. Abscisate is bound by residues K64, 93 to 98 (ASTSTE), 120 to 126 (RLKNYKS), and E147. The Gate loop signature appears at 89–93 (SGLPA). The Latch loop signature appears at 119–121 (HRL).

Belongs to the PYR/PYL/RCAR abscisic acid intracellular receptor family. In terms of assembly, homodimer. Binds ABA on one subunit only. Interacts with HAB1, ABI1 and ABI2, and possibly with other PP2Cs. Binds to CARs protein in an ABA-independent manner, both at the plasma membrane and in the nucleus.

It localises to the cytoplasm. Its subcellular location is the nucleus. The protein resides in the cell membrane. Receptor for abscisic acid (ABA) required for ABA-mediated responses such as stomatal closure and germination inhibition. Inhibits the activity of group-A protein phosphatases type 2C (PP2Cs) when activated by ABA. Can be activated by both (-)-ABA and (+)-ABA. The protein is Abscisic acid receptor PYL2 (PYL2) of Arabidopsis thaliana (Mouse-ear cress).